The sequence spans 514 residues: Glutamyl-tRNA(Gln) amidotransferase subunit B, mitochondrial (514 aa).

It belongs to the GatB/GatE family. GatB subfamily. As to quaternary structure, subunit of the heterotrimeric GatCAB amidotransferase (AdT) complex, composed of A, B and C subunits.

The protein resides in the mitochondrion. The enzyme catalyses L-glutamyl-tRNA(Gln) + L-glutamine + ATP + H2O = L-glutaminyl-tRNA(Gln) + L-glutamate + ADP + phosphate + H(+). Functionally, allows the formation of correctly charged Gln-tRNA(Gln) through the transamidation of misacylated Glu-tRNA(Gln) in the mitochondria. The reaction takes place in the presence of glutamine and ATP through an activated gamma-phospho-Glu-tRNA(Gln). This Naegleria gruberi (Amoeba) protein is Glutamyl-tRNA(Gln) amidotransferase subunit B, mitochondrial.